A 173-amino-acid chain; its full sequence is uncharacterized protein (173 aa).

The tract at residues 49 to 72 is disordered; that stretch reads PTRSGRTSNSGNRGPVMTSTSSIN.

This is an uncharacterized protein from Human adenovirus B serotype 7 (HAdV-7).